The primary structure comprises 88 residues: Toxin RelE2 (88 aa).

It belongs to the RelE toxin family.

In terms of biological role, toxic component of a type II toxin-antitoxin (TA) system. Its toxic effect is neutralized by coexpression with cognate antitoxin RelB2 but no other ParD or RelB antitoxin. In Caulobacter vibrioides (strain ATCC 19089 / CIP 103742 / CB 15) (Caulobacter crescentus), this protein is Toxin RelE2 (relE2).